A 589-amino-acid chain; its full sequence is UvrABC system protein C (589 aa).

The GIY-YIG domain occupies 14 to 91 (HKPGCYLWKD…IAKYKPKYNM (78 aa)).

The protein belongs to the UvrC family. In terms of assembly, interacts with UvrB in an incision complex.

Its subcellular location is the cytoplasm. The UvrABC repair system catalyzes the recognition and processing of DNA lesions. UvrC both incises the 5' and 3' sides of the lesion. The N-terminal half is responsible for the 3' incision and the C-terminal half is responsible for the 5' incision. This is UvrABC system protein C from Malacoplasma penetrans (strain HF-2) (Mycoplasma penetrans).